We begin with the raw amino-acid sequence, 364 residues long: Protein-glutamate methylesterase/protein-glutamine glutaminase (364 aa).

Residues 5-123 (RVLVVDDTIL…PAANKAALAN (119 aa)) form the Response regulatory domain. 4-aspartylphosphate is present on Asp-56. Residues 174–364 (EIVVIGISTG…QEIVHTVKLY (191 aa)) form the CheB-type methylesterase domain. Active-site residues include Ser-181, His-208, and Asp-306.

This sequence belongs to the CheB family. Phosphorylated by CheA. Phosphorylation of the N-terminal regulatory domain activates the methylesterase activity.

The protein localises to the cytoplasm. It carries out the reaction [protein]-L-glutamate 5-O-methyl ester + H2O = L-glutamyl-[protein] + methanol + H(+). It catalyses the reaction L-glutaminyl-[protein] + H2O = L-glutamyl-[protein] + NH4(+). Involved in chemotaxis. Part of a chemotaxis signal transduction system that modulates chemotaxis in response to various stimuli. Catalyzes the demethylation of specific methylglutamate residues introduced into the chemoreceptors (methyl-accepting chemotaxis proteins or MCP) by CheR. Also mediates the irreversible deamidation of specific glutamine residues to glutamic acid. This Desulfotalea psychrophila (strain LSv54 / DSM 12343) protein is Protein-glutamate methylesterase/protein-glutamine glutaminase.